The chain runs to 228 residues: Aquaporin Z 1 (228 aa).

2 helical membrane-spanning segments follow: residues 9–29 and 34–54; these read FLGT…AAAF and IGLL…AYAV. Residues 63–65 carry the NPA 1 motif; it reads NPA. 3 consecutive transmembrane segments (helical) span residues 82–102, 129–149, and 156–176; these read VGYI…LYVI, LTAA…IILG, and PVGF…LVSI. Residues 184 to 186 carry the NPA 2 motif; it reads NPA. Residues 204–224 form a helical membrane-spanning segment; sequence WLFWVAPLIGAVIAGIVWKIV.

This sequence belongs to the MIP/aquaporin (TC 1.A.8) family. In terms of assembly, homotetramer.

Its subcellular location is the cell inner membrane. The catalysed reaction is H2O(in) = H2O(out). Its function is as follows. Channel that permits osmotically driven movement of water in both directions. It is involved in the osmoregulation and in the maintenance of cell turgor during volume expansion in rapidly growing cells. It mediates rapid entry or exit of water in response to abrupt changes in osmolarity. The sequence is that of Aquaporin Z 1 from Rhizobium meliloti (strain 1021) (Ensifer meliloti).